A 307-amino-acid polypeptide reads, in one-letter code: Protoheme IX farnesyltransferase (307 aa).

8 helical membrane passes run 32–52 (MGIV…ALHF), 65–85 (FFTI…NNYI), 108–128 (PGFA…FLLL), 131–151 (PMAV…YSLW), 158–178 (LNTV…WAAI), 186–206 (IAWM…LALA), 251–271 (LGIT…VLGF), and 287–307 (FVYS…VTFF).

This sequence belongs to the UbiA prenyltransferase family. Protoheme IX farnesyltransferase subfamily. In terms of assembly, interacts with CtaA.

The protein localises to the cell membrane. It catalyses the reaction heme b + (2E,6E)-farnesyl diphosphate + H2O = Fe(II)-heme o + diphosphate. It participates in porphyrin-containing compound metabolism; heme O biosynthesis; heme O from protoheme: step 1/1. In terms of biological role, converts heme B (protoheme IX) to heme O by substitution of the vinyl group on carbon 2 of heme B porphyrin ring with a hydroxyethyl farnesyl side group. The sequence is that of Protoheme IX farnesyltransferase from Bacillus anthracis (strain A0248).